The primary structure comprises 142 residues: Small ribosomal subunit protein uS8c (142 aa).

Belongs to the universal ribosomal protein uS8 family. In terms of assembly, part of the 30S ribosomal subunit.

The protein resides in the plastid. In terms of biological role, one of the primary rRNA binding proteins, it binds directly to 16S rRNA central domain where it helps coordinate assembly of the platform of the 30S subunit. This Euglena longa (Euglenophycean alga) protein is Small ribosomal subunit protein uS8c (rps8).